The sequence spans 527 residues: ATP synthase subunit alpha (527 aa).

An ATP-binding site is contributed by 177-184 (GDRQTGKT).

It belongs to the ATPase alpha/beta chains family. F-type ATPases have 2 components, CF(1) - the catalytic core - and CF(0) - the membrane proton channel. CF(1) has five subunits: alpha(3), beta(3), gamma(1), delta(1), epsilon(1). CF(0) has four main subunits: a(1), b(1), b'(1) and c(9-12).

It localises to the cell membrane. The enzyme catalyses ATP + H2O + 4 H(+)(in) = ADP + phosphate + 5 H(+)(out). Its function is as follows. Produces ATP from ADP in the presence of a proton gradient across the membrane. The alpha chain is a regulatory subunit. The protein is ATP synthase subunit alpha of Roseiflexus sp. (strain RS-1).